The primary structure comprises 537 residues: CTP synthase (537 aa).

The tract at residues 1–267 (MAKFVFVTGG…ADIVLDKLGI (267 aa)) is amidoligase domain. Serine 13 lines the CTP pocket. Serine 13 lines the UTP pocket. 14-19 (SLGKGI) lines the ATP pocket. An L-glutamine-binding site is contributed by tyrosine 54. Aspartate 71 lines the ATP pocket. Residues aspartate 71 and glutamate 141 each contribute to the Mg(2+) site. Residues 148 to 150 (DIE), 188 to 193 (KTKPTQ), and lysine 224 each bind CTP. UTP is bound by residues 188–193 (KTKPTQ) and lysine 224. A Glutamine amidotransferase type-1 domain is found at 292-534 (TIALVGKYVS…IGAARKYKES (243 aa)). An L-glutamine-binding site is contributed by glycine 354. Cysteine 381 (nucleophile; for glutamine hydrolysis) is an active-site residue. L-glutamine contacts are provided by residues 382–385 (LGMQ), glutamate 405, and arginine 462. Active-site residues include histidine 507 and glutamate 509.

Belongs to the CTP synthase family. Homotetramer.

It carries out the reaction UTP + L-glutamine + ATP + H2O = CTP + L-glutamate + ADP + phosphate + 2 H(+). The catalysed reaction is L-glutamine + H2O = L-glutamate + NH4(+). It catalyses the reaction UTP + NH4(+) + ATP = CTP + ADP + phosphate + 2 H(+). The protein operates within pyrimidine metabolism; CTP biosynthesis via de novo pathway; CTP from UDP: step 2/2. Its activity is regulated as follows. Allosterically activated by GTP, when glutamine is the substrate; GTP has no effect on the reaction when ammonia is the substrate. The allosteric effector GTP functions by stabilizing the protein conformation that binds the tetrahedral intermediate(s) formed during glutamine hydrolysis. Inhibited by the product CTP, via allosteric rather than competitive inhibition. Functionally, catalyzes the ATP-dependent amination of UTP to CTP with either L-glutamine or ammonia as the source of nitrogen. Regulates intracellular CTP levels through interactions with the four ribonucleotide triphosphates. The chain is CTP synthase from Pelotomaculum thermopropionicum (strain DSM 13744 / JCM 10971 / SI).